A 676-amino-acid polypeptide reads, in one-letter code: Protein TAPT1 homolog (676 aa).

The segment at 1-44 is disordered; the sequence is MNATLNSAGGKRQLRFRGDVTGSRVEELHHQQQEEQKQKAPLAQ. The span at 24-38 shows a compositional bias: basic and acidic residues; that stretch reads RVEELHHQQQEEQKQ. Transmembrane regions (helical) follow at residues 128–148, 170–190, 249–269, 346–366, 414–434, and 437–457; these read SFLY…WALV, EICD…MLLV, VLTH…LIMF, FCVM…IDWV, GFIP…AVSF, and LAAW…RICL. A disordered region spans residues 625 to 676; that stretch reads SGDGVTSAKAKKATQRLPKRTHKRSESEPGMPSMVEKGGAAGIAGGNQTTQL. The span at 633-647 shows a compositional bias: basic residues; sequence KAKKATQRLPKRTHK.

It belongs to the TAPT1 family.

It localises to the membrane. This chain is Protein TAPT1 homolog, found in Drosophila melanogaster (Fruit fly).